A 516-amino-acid polypeptide reads, in one-letter code: Polyprenol-phosphate-mannose--protein mannosyltransferase (516 aa).

Helical transmembrane passes span Tyr113–Val133, Ser143–Ser163, Thr166–Val186, Trp234–Ala254, Ala275–Phe295, Val384–Leu404, Trp413–Ile433, Met437–Leu457, and Leu473–Tyr493.

Belongs to the glycosyltransferase 39 family.

Its subcellular location is the cell membrane. Its pathway is protein modification; protein glycosylation. Protein O-mannosyltransferase that catalyzes the transfer of a single mannose residue from a polyprenol phospho-mannosyl lipidic donor to the hydroxyl group of selected serine and threonine residues in acceptor proteins. The protein is Polyprenol-phosphate-mannose--protein mannosyltransferase of Mycolicibacterium smegmatis (strain ATCC 700084 / mc(2)155) (Mycobacterium smegmatis).